A 272-amino-acid chain; its full sequence is Inositol monophosphatase (272 aa).

4 residues coordinate Mg(2+): Glu-71, Asp-90, Ile-92, and Asp-93. Glu-71 contacts substrate. Substrate-binding positions include 92 to 95 (IDGT), 194 to 196 (GTA), Glu-213, and Asp-220. Asp-220 serves as a coordination point for Mg(2+).

It belongs to the inositol monophosphatase superfamily. Mg(2+) serves as cofactor.

The protein resides in the cytoplasm. It carries out the reaction a myo-inositol phosphate + H2O = myo-inositol + phosphate. The enzyme catalyses alpha-D-galactose 1-phosphate + H2O = D-galactose + phosphate. It functions in the pathway polyol metabolism; myo-inositol biosynthesis; myo-inositol from D-glucose 6-phosphate: step 2/2. Its activity is regulated as follows. Inhibited by Li(+), Ca(2+) and Mn(2+), but also by Mg(2+) at concentrations above 3 mM. Functionally, responsible for the provision of inositol required for synthesis of phosphatidylinositol and polyphosphoinositides. Has broad substrate specificity and can use myo-inositol monophosphates, myo-inositol 1,3-diphosphate, myo-inositol 1,4-diphosphate, scyllo-inositol-phosphate, D-galactose 1-phosphate, glucose-1-phosphate, glucose-6-phosphate, fructose-1-phosphate, beta-glycerophosphate, and 2'-AMP as substrates. The chain is Inositol monophosphatase (impa1) from Dictyostelium discoideum (Social amoeba).